The following is a 312-amino-acid chain: 1-(5-phosphoribosyl)-5-[(5-phosphoribosylamino)methylideneamino] imidazole-4-carboxamide isomerase HISN3, chloroplastic (312 aa).

The transit peptide at 1–67 directs the protein to the chloroplast; it reads MRSPASTPSI…IHKGKVKQIV (67 aa). Residue Asp-57 coordinates 1-(5-phospho-beta-D-ribosyl)-5-[(5-phospho-beta-D-ribosylamino)methylideneamino]imidazole-4-carboxamide. 5-[(5-phospho-1-deoxy-D-ribulos-1-ylimino)methylamino]-1-(5-phospho-beta-D-ribosyl)imidazole-4-carboxamide is bound at residue Gln-65. Gln-65 and Ile-66 together coordinate Na(+). Position 68 (Gly-68) interacts with 1-(5-phospho-beta-D-ribosyl)-5-[(5-phospho-beta-D-ribosylamino)methylideneamino]imidazole-4-carboxamide. 5-[(5-phospho-1-deoxy-D-ribulos-1-ylimino)methylamino]-1-(5-phospho-beta-D-ribosyl)imidazole-4-carboxamide contacts are provided by His-108, Gly-138, Thr-158, and Ser-159. Residues Gly-138, Thr-158, and Ser-159 each coordinate 1-(5-phospho-beta-D-ribosyl)-5-[(5-phospho-beta-D-ribosylamino)methylideneamino]imidazole-4-carboxamide. Ser-159 and Phe-162 together coordinate Na(+). The 1-(5-phospho-beta-D-ribosyl)-5-[(5-phospho-beta-D-ribosylamino)methylideneamino]imidazole-4-carboxamide site is built by Asp-187, Arg-203, Trp-204, and His-230. Residue Asp-187 participates in 5-[(5-phospho-1-deoxy-D-ribulos-1-ylimino)methylamino]-1-(5-phospho-beta-D-ribosyl)imidazole-4-carboxamide binding. Trp-204 contacts 5-[(5-phospho-1-deoxy-D-ribulos-1-ylimino)methylamino]-1-(5-phospho-beta-D-ribosyl)imidazole-4-carboxamide. Glu-235 lines the Na(+) pocket. Positions 236, 262, 285, and 286 each coordinate 1-(5-phospho-beta-D-ribosyl)-5-[(5-phospho-beta-D-ribosylamino)methylideneamino]imidazole-4-carboxamide. Positions 236, 262, 285, and 286 each coordinate 5-[(5-phospho-1-deoxy-D-ribulos-1-ylimino)methylamino]-1-(5-phospho-beta-D-ribosyl)imidazole-4-carboxamide.

Belongs to the HisA/HisF family. The cofactor is Na(+).

It is found in the plastid. The protein localises to the chloroplast. It catalyses the reaction 1-(5-phospho-beta-D-ribosyl)-5-[(5-phospho-beta-D-ribosylamino)methylideneamino]imidazole-4-carboxamide = 5-[(5-phospho-1-deoxy-D-ribulos-1-ylimino)methylamino]-1-(5-phospho-beta-D-ribosyl)imidazole-4-carboxamide. Its pathway is amino-acid biosynthesis; L-histidine biosynthesis; L-histidine from 5-phospho-alpha-D-ribose 1-diphosphate: step 4/9. Component of the histidine biosynthesis pathway that catalyzes the isomerization of 5'-ProFAR (pro-phosphoribosyl formimino-5-aminoimidazole-4-carboxamide ribonucleotide, referred as 1-(5-phospho-beta-D-ribosyl)-5-[(5-phospho-beta-D-ribosylamino)methylideneamino]imidazole-4-carboxamide) to PrFAR (phosphoribulosyl formimino-5-aminoimidazole-4-carboxamide ribonucleotide, referred as 5-[(5-phospho-1-deoxy-D-ribulos-1-ylimino)methylamino]-1-(5-phospho-beta-D-ribosyl)imidazole-4-carboxamide). This Medicago truncatula (Barrel medic) protein is 1-(5-phosphoribosyl)-5-[(5-phosphoribosylamino)methylideneamino] imidazole-4-carboxamide isomerase HISN3, chloroplastic.